A 750-amino-acid chain; its full sequence is Photosystem I P700 chlorophyll a apoprotein A1 (750 aa).

A run of 8 helical transmembrane segments spans residues valine 70–alanine 93, leucine 156–histidine 179, leucine 195–leucine 219, isoleucine 291–tyrosine 309, tryptophan 346–tyrosine 369, leucine 385–valine 411, alanine 433–histidine 455, and phenylalanine 531–leucine 549. Positions 573 and 582 each coordinate [4Fe-4S] cluster. The next 2 helical transmembrane spans lie at histidine 589–tryptophan 610 and leucine 664–phenylalanine 686. Residue histidine 675 participates in chlorophyll a' binding. Residues methionine 683 and tyrosine 691 each contribute to the chlorophyll a site. Residue tryptophan 692 coordinates phylloquinone. Residues alanine 724–alanine 744 traverse the membrane as a helical segment.

Belongs to the PsaA/PsaB family. In terms of assembly, the PsaA/B heterodimer binds the P700 chlorophyll special pair and subsequent electron acceptors. PSI consists of a core antenna complex that captures photons, and an electron transfer chain that converts photonic excitation into a charge separation. The eukaryotic PSI reaction center is composed of at least 11 subunits. Requires P700 is a chlorophyll a/chlorophyll a' dimer, A0 is one or more chlorophyll a, A1 is one or both phylloquinones and FX is a shared 4Fe-4S iron-sulfur center. as cofactor.

Its subcellular location is the plastid. It is found in the chloroplast thylakoid membrane. The catalysed reaction is reduced [plastocyanin] + hnu + oxidized [2Fe-2S]-[ferredoxin] = oxidized [plastocyanin] + reduced [2Fe-2S]-[ferredoxin]. Functionally, psaA and PsaB bind P700, the primary electron donor of photosystem I (PSI), as well as the electron acceptors A0, A1 and FX. PSI is a plastocyanin-ferredoxin oxidoreductase, converting photonic excitation into a charge separation, which transfers an electron from the donor P700 chlorophyll pair to the spectroscopically characterized acceptors A0, A1, FX, FA and FB in turn. Oxidized P700 is reduced on the lumenal side of the thylakoid membrane by plastocyanin. This Phalaenopsis aphrodite subsp. formosana (Moth orchid) protein is Photosystem I P700 chlorophyll a apoprotein A1.